A 274-amino-acid chain; its full sequence is 2,3,4,5-tetrahydropyridine-2,6-dicarboxylate N-succinyltransferase (274 aa).

Substrate is bound by residues arginine 105 and aspartate 142.

It belongs to the transferase hexapeptide repeat family. Homotrimer.

The protein resides in the cytoplasm. The catalysed reaction is (S)-2,3,4,5-tetrahydrodipicolinate + succinyl-CoA + H2O = (S)-2-succinylamino-6-oxoheptanedioate + CoA. It participates in amino-acid biosynthesis; L-lysine biosynthesis via DAP pathway; LL-2,6-diaminopimelate from (S)-tetrahydrodipicolinate (succinylase route): step 1/3. This chain is 2,3,4,5-tetrahydropyridine-2,6-dicarboxylate N-succinyltransferase, found in Thiobacillus denitrificans (strain ATCC 25259 / T1).